The primary structure comprises 122 residues: Large ribosomal subunit protein uL18 (122 aa).

Belongs to the universal ribosomal protein uL18 family. In terms of assembly, part of the 50S ribosomal subunit; part of the 5S rRNA/L5/L18/L25 subcomplex. Contacts the 5S and 23S rRNAs.

Its function is as follows. This is one of the proteins that bind and probably mediate the attachment of the 5S RNA into the large ribosomal subunit, where it forms part of the central protuberance. In Thermosipho melanesiensis (strain DSM 12029 / CIP 104789 / BI429), this protein is Large ribosomal subunit protein uL18.